Reading from the N-terminus, the 309-residue chain is Anamorsin (309 aa).

An N-terminal SAM-like domain region spans residues 6–172 (ISPGQLVAVF…KPNFEVGSSS (167 aa)). The tract at residues 173 to 222 (QLKLPNKKSSSVKPVVDPAAAKLWTLSANDMEDDSVDLIDSDELLDPEDL) is linker. Residues S182, S183, and S213 each carry the phosphoserine modification. Residues C235, C244, C247, and C249 each coordinate [2Fe-2S] cluster. The tract at residues 235 to 249 (CGEGKKRKACKNCTC) is fe-S binding site A. Residue S269 is modified to Phosphoserine. [4Fe-4S] cluster-binding residues include C271, C274, C282, and C285. 2 short sequence motifs (cx2C motif) span residues 271 to 274 (CGNC) and 282 to 285 (CANC). A fe-S binding site B region spans residues 271–285 (CGNCYLGDAFRCANC). Phosphoserine is present on residues S302 and S304.

This sequence belongs to the anamorsin family. In terms of assembly, monomer. Interacts with NDOR1. Interacts with CHCHD4. Requires [2Fe-2S] cluster as cofactor. The cofactor is [4Fe-4S] cluster.

The protein resides in the cytoplasm. It localises to the nucleus. The protein localises to the mitochondrion intermembrane space. Component of the cytosolic iron-sulfur (Fe-S) protein assembly (CIA) machinery required for the maturation of extramitochondrial Fe-S proteins. Part of an electron transfer chain functioning in an early step of cytosolic Fe-S biogenesis, facilitating the de novo assembly of a [4Fe-4S] cluster on the scaffold complex NUBP1-NUBP2. Electrons are transferred to CIAPIN1 from NADPH via the FAD- and FMN-containing protein NDOR1. NDOR1-CIAPIN1 are also required for the assembly of the diferric tyrosyl radical cofactor of ribonucleotide reductase (RNR), probably by providing electrons for reduction during radical cofactor maturation in the catalytic small subunit. Has anti-apoptotic effects in the cell. Involved in negative control of cell death upon cytokine withdrawal. Promotes development of hematopoietic cells. This chain is Anamorsin, found in Mus musculus (Mouse).